The chain runs to 346 residues: Free fatty acid receptor 3 (346 aa).

Residues 1-19 (MDTGPDQSYFSGNHWFVFS) are Extracellular-facing. The chain crosses the membrane as a helical span at residues 20-40 (VYLLTFLVGLPLNLLALVVFV). The Cytoplasmic segment spans residues 41 to 47 (GKLQRRP). Residues 48–68 (VAVDVLLLNLTASDLLLLLFL) traverse the membrane as a helical segment. The Extracellular portion of the chain corresponds to 69–88 (PFRMVEAANGMHWPLPFILC). An intrachain disulfide couples cysteine 88 to cysteine 169. A helical membrane pass occupies residues 89–111 (PLSGFIFFTTIYLTALFLAAVSI). The Cytoplasmic portion of the chain corresponds to 112–132 (ERFLSVAHPLWYKTRPRLGQA). A helical transmembrane segment spans residues 133 to 153 (GLVSVACWLLASAHCSVVYVI). Residues 154–178 (EFSGDISHSQGTNGTCYLEFRKDQL) lie on the Extracellular side of the membrane. Residue asparagine 166 is glycosylated (N-linked (GlcNAc...) asparagine). A helical transmembrane segment spans residues 179–199 (AILLPVRLEMAVVLFVVPLII). Residues 200–222 (TSYCYSRLVWILGRGGSHRRQRR) lie on the Cytoplasmic side of the membrane. The helical transmembrane segment at 223-243 (VAGLLAATLLNFLVCFGPYNV) threads the bilayer. Residues 244–258 (SHVVGYICGESPAWR) are Extracellular-facing. A helical transmembrane segment spans residues 259 to 279 (IYVTLLSTLNSCVDPFVYYFS). The Cytoplasmic portion of the chain corresponds to 280–346 (SSGFQADFHE…TGGQVACAES (67 aa)). Basic and acidic residues predominate over residues 307-330 (MELKEQKGGEEQRADRPAERKTSE). The segment at 307 to 346 (MELKEQKGGEEQRADRPAERKTSEHSQGCGTGGQVACAES) is disordered.

Belongs to the G-protein coupled receptor 1 family. Highest level in adipose tissue, and lower expression across all tissues tested. Expressed in sympathetic ganglia.

The protein resides in the cell membrane. G protein-coupled receptor that is activated by a major product of dietary fiber digestion, the short chain fatty acids (SCFAs), and that plays a role in the regulation of whole-body energy homeostasis and in intestinal immunity. In omnivorous mammals, the short chain fatty acids acetate, propionate and butyrate are produced primarily by the gut microbiome that metabolizes dietary fibers. SCFAs serve as a source of energy but also act as signaling molecules. That G protein-coupled receptor is probably coupled to the pertussis toxin-sensitive, G(i/o)-alpha family of G proteins. Its activation results in the formation of inositol 1,4,5-trisphosphate, the mobilization of intracellular calcium, the phosphorylation of the MAPK3/ERK1 and MAPK1/ERK2 kinases and the inhibition of intracellular cAMP accumulation. Activated by SCFAs and by beta-hydroxybutyrate, a ketone body produced by the liver upon starvation, it inhibits N-type calcium channels and modulates the activity of sympathetic neurons through a signaling cascade involving the beta and gamma subunits of its coupled G protein, phospholipase C and MAP kinases. Thereby, it may regulate energy expenditure through the control of the sympathetic nervous system that controls for instance heart rate. Upon activation by SCFAs accumulating in the intestine, it may also signal to the brain via neural circuits which in turn would regulate intestinal gluconeogenesis. May also control the production of hormones involved in whole-body energy homeostasis. May for instance, regulate blood pressure through renin secretion. May also regulate secretion of the PYY peptide by enteroendocrine cells and control gut motility, intestinal transit rate, and the harvesting of energy from SCFAs produced by gut microbiota. May also indirectly regulate the production of LEP/Leptin, a hormone acting on the CNS to inhibit food intake, in response to the presence of short-chain fatty acids in the intestine. Finally, may also play a role in glucose homeostasis. Besides its role in energy homeostasis, may play a role in intestinal immunity. May mediate the activation of the inflammatory and immune response by SCFAs in the gut, regulating the rapid production of chemokines and cytokines by intestinal epithelial cells. Among SCFAs, the fatty acids containing less than 6 carbons, the most potent activators are probably propionate, butyrate and pentanoate while acetate is a poor activator. This is Free fatty acid receptor 3 (FFAR3) from Homo sapiens (Human).